We begin with the raw amino-acid sequence, 364 residues long: Melatonin receptor type 1B (364 aa).

The signal sequence occupies residues 1–28 (MPDNSSIANCCAASGLAARPSWPGSAEA). Residues 29 to 45 (EPPETPRAPWVAPMLST) lie on the Extracellular side of the membrane. A helical membrane pass occupies residues 46–66 (VVIVTTAVDFVGNLLVILSVL). Over 67–81 (RNRKLRNAGNLFVVN) the chain is Cytoplasmic. The chain crosses the membrane as a helical span at residues 82 to 102 (LALADLVVALYPYPLILVAIL). The Extracellular portion of the chain corresponds to 103–115 (HDGWVLGEIHCKA). Cysteines 113 and 190 form a disulfide. The chain crosses the membrane as a helical span at residues 116-136 (SAFVMGLSVIGSVFNITAIAI). Topologically, residues 137–158 (NRYWCICHSATYHRACSQWHAP) are cytoplasmic. A helical transmembrane segment spans residues 159–179 (LYISLIWLLTLVALVPNFFVG). Residues 180-200 (SLEYDPRIYSCTFIQTASTQY) are Extracellular-facing. The helical transmembrane segment at 201–221 (TMAVVAIHFLLPIAVVSFCYL) threads the bilayer. The Cytoplasmic portion of the chain corresponds to 222–255 (RIWILVLQARRKAKAERKLRLRPSDLRSFLTMFA). The chain crosses the membrane as a helical span at residues 256–276 (VFVVFAICWAPLNCIGLAVAI). Residues 277–287 (NPEAMALQIPE) are Extracellular-facing. A helical transmembrane segment spans residues 288–308 (GLFVTSYFLAYFNSCLNAIVY). Residues 309–364 (GLLNQNFRREYKRILSALWSTGRCFHDASKCHLTEDLQGPVPPAAMATIPVQEGAL) are Cytoplasmic-facing.

This sequence belongs to the G-protein coupled receptor 1 family. In terms of tissue distribution, expressed in the hippocampus, kidney, and ovary.

It localises to the cell membrane. In terms of biological role, high affinity receptor for melatonin. The activity of this receptor is mediated by pertussis toxin sensitive G proteins that inhibits adenylate cyclase activity. The polypeptide is Melatonin receptor type 1B (Rattus norvegicus (Rat)).